Reading from the N-terminus, the 1209-residue chain is DNA-directed RNA polymerase subunit beta'' (1209 aa).

Zn(2+) is bound by residues C233, C308, C315, and C318.

Belongs to the RNA polymerase beta' chain family. RpoC2 subfamily. In plastids the minimal PEP RNA polymerase catalytic core is composed of four subunits: alpha, beta, beta', and beta''. When a (nuclear-encoded) sigma factor is associated with the core the holoenzyme is formed, which can initiate transcription. It depends on Zn(2+) as a cofactor.

The protein resides in the plastid. It is found in the chloroplast. It carries out the reaction RNA(n) + a ribonucleoside 5'-triphosphate = RNA(n+1) + diphosphate. Functionally, DNA-dependent RNA polymerase catalyzes the transcription of DNA into RNA using the four ribonucleoside triphosphates as substrates. The sequence is that of DNA-directed RNA polymerase subunit beta'' from Pinus koraiensis (Korean pine).